Reading from the N-terminus, the 251-residue chain is Cell division protein ZapD (251 aa).

Belongs to the ZapD family. Interacts with FtsZ.

Its subcellular location is the cytoplasm. Its function is as follows. Cell division factor that enhances FtsZ-ring assembly. Directly interacts with FtsZ and promotes bundling of FtsZ protofilaments, with a reduction in FtsZ GTPase activity. This Azoarcus sp. (strain BH72) protein is Cell division protein ZapD.